The following is a 508-amino-acid chain: Glycerol kinase (508 aa).

Residue T14 coordinates ADP. 3 residues coordinate ATP: T14, T15, and S16. T14 is a binding site for sn-glycerol 3-phosphate. R18 provides a ligand contact to ADP. Sn-glycerol 3-phosphate contacts are provided by R84, E85, Y134, and D247. R84, E85, Y134, D247, and Q248 together coordinate glycerol. ADP contacts are provided by T269 and G313. ATP-binding residues include T269, G313, Q317, and G416. G416 contributes to the ADP binding site.

This sequence belongs to the FGGY kinase family.

The enzyme catalyses glycerol + ATP = sn-glycerol 3-phosphate + ADP + H(+). Its pathway is polyol metabolism; glycerol degradation via glycerol kinase pathway; sn-glycerol 3-phosphate from glycerol: step 1/1. Its activity is regulated as follows. Inhibited by fructose 1,6-bisphosphate (FBP). In terms of biological role, key enzyme in the regulation of glycerol uptake and metabolism. Catalyzes the phosphorylation of glycerol to yield sn-glycerol 3-phosphate. The chain is Glycerol kinase from Mycoplasmoides gallisepticum (strain R(low / passage 15 / clone 2)) (Mycoplasma gallisepticum).